The chain runs to 504 residues: Glutamate--tRNA ligase (504 aa).

The 'HIGH' region motif lies at P9–T19. Residues K248–R252 carry the 'KMSKS' region motif. K251 serves as a coordination point for ATP.

The protein belongs to the class-I aminoacyl-tRNA synthetase family. Glutamate--tRNA ligase type 1 subfamily. Monomer.

The protein resides in the cytoplasm. The enzyme catalyses tRNA(Glu) + L-glutamate + ATP = L-glutamyl-tRNA(Glu) + AMP + diphosphate. Its function is as follows. Catalyzes the attachment of glutamate to tRNA(Glu) in a two-step reaction: glutamate is first activated by ATP to form Glu-AMP and then transferred to the acceptor end of tRNA(Glu). The protein is Glutamate--tRNA ligase of Acidothermus cellulolyticus (strain ATCC 43068 / DSM 8971 / 11B).